The sequence spans 320 residues: ADP-L-glycero-D-manno-heptose-6-epimerase (320 aa).

NADP(+) contacts are provided by residues 10 to 11 (FI), 31 to 32 (DN), Lys-38, Lys-53, 75 to 79 (LGACS), and Asn-92. The active-site Proton acceptor is Tyr-139. Lys-143 is an NADP(+) binding site. Position 168 (Asn-168) interacts with substrate. Val-169 and Lys-177 together coordinate NADP(+). Lys-177 functions as the Proton acceptor in the catalytic mechanism. Substrate contacts are provided by residues Gly-179, His-186, 200–203 (FEGS), Arg-213, and Tyr-277.

This sequence belongs to the NAD(P)-dependent epimerase/dehydratase family. HldD subfamily. As to quaternary structure, homopentamer. NADP(+) serves as cofactor.

The catalysed reaction is ADP-D-glycero-beta-D-manno-heptose = ADP-L-glycero-beta-D-manno-heptose. Its pathway is nucleotide-sugar biosynthesis; ADP-L-glycero-beta-D-manno-heptose biosynthesis; ADP-L-glycero-beta-D-manno-heptose from D-glycero-beta-D-manno-heptose 7-phosphate: step 4/4. Catalyzes the interconversion between ADP-D-glycero-beta-D-manno-heptose and ADP-L-glycero-beta-D-manno-heptose via an epimerization at carbon 6 of the heptose. This Alkalilimnicola ehrlichii (strain ATCC BAA-1101 / DSM 17681 / MLHE-1) protein is ADP-L-glycero-D-manno-heptose-6-epimerase.